A 379-amino-acid polypeptide reads, in one-letter code: Stimulator of interferon genes protein (379 aa).

2 helical membrane passes run 18 to 38 (AKKAAFVLLSVCLVVLWDLGE) and 43 to 63 (ILQWLMLHLASLQLGLLFKGV). 2 S-palmitoyl cysteine lipidation sites follow: C88 and C91. The next 2 membrane-spanning stretches (helical) occupy residues 89 to 109 (LGCPIRCGTLLLLSCYFYTPF) and 114 to 134 (HLPFTWTLALLGLSQALSILL). Positions 153–340 (LNVAQGMAWS…RHLKQEEKEE (188 aa)) are cyclic dinucleotide-binding domain (CBD). 4 residues coordinate 2',3'-cGAMP: S162, Y167, R238, and T263. Residues S162, Y167, 238–241 (RVYT), and T263 contribute to the 3',3'-c-di-GMP site. Y167, R238, and T263 together coordinate 2',3'-cUAMP. The tract at residues 338-363 (KEEVTVDSARTSVMPDPSMLPQGPEL) is disordered. Residues 340–379 (EVTVDSARTSVMPDPSMLPQGPELLISSMDQPLPLRTDVF) are C-terminal tail (CTT). S355 is modified (phosphoserine). The pLxIS motif motif lies at 363–366 (LLIS). The residue at position 366 (S366) is a Phosphoserine; by TBK1.

Belongs to the STING family. Homodimer; forms a homodimer in absence of cyclic nucleotide (c-di-GMP or cGAMP). Homotetramer; in presence of cyclic nucleotide (c-di-GMP or cGAMP), forms tetramers and higher-order oligomers through side-by-side packing. Interacts (when phosphorylated) with IRF3; following activation and phosphorylation on the pLxIS motif by TBK1, recruits IRF3. Interacts with TBK1; when homodimer, leading to subsequent production of IFN-beta. Interacts (via transmembrane domain) with TMEM203. In terms of processing, phosphorylation by TBK1 leads to activation and production of IFN-beta. Following cyclic nucleotide (c-di-GMP or cGAMP)-binding, activation and translocation from the endoplasmic reticulum, STING1 is phosphorylated by TBK1 at Ser-366 in the pLxIS motif. The phosphorylated pLxIS motif constitutes an IRF3-binding motif, leading to recruitment of the transcription factor IRF3 to induce type-I interferons and other cytokines. In contrast, lacks phosphorylation site at position 358, leading to reduced production of type-I interferons and other cytokines.

The protein localises to the endoplasmic reticulum membrane. Its subcellular location is the cytoplasm. The protein resides in the perinuclear region. It is found in the endoplasmic reticulum-Golgi intermediate compartment membrane. It localises to the golgi apparatus membrane. The protein localises to the cytoplasmic vesicle. Its subcellular location is the autophagosome membrane. The protein resides in the mitochondrion outer membrane. It is found in the cell membrane. It carries out the reaction H(+)(in) = H(+)(out). Functionally, facilitator of innate immune signaling that acts as a sensor of cytosolic DNA from bacteria and viruses and promotes low production of type I interferon (IFN-alpha and IFN-beta). Compared to other mammals, STING1-dependent type I interferon induction is strongly reduced in bats, suggesting that the cGAS-STING pathway promotes a limited inflammatory response. Innate immune response is triggered in response to non-CpG double-stranded DNA from viruses and bacteria delivered to the cytoplasm. Acts by binding cyclic dinucleotides: recognizes and binds cyclic di-GMP (c-di-GMP), a second messenger produced by bacteria, cyclic UMP-AMP (2',3'-cUAMP), and cyclic GMP-AMP (cGAMP), a messenger produced by CGAS in response to DNA virus in the cytosol. Upon binding to c-di-GMP, cUAMP or cGAMP, STING1 oligomerizes, translocates from the endoplasmic reticulum and is phosphorylated by TBK1 on the pLxIS motif, leading to recruitment and subsequent activation of the transcription factor IRF3 to induce expression of type I interferon and exert a potent anti-viral state. In addition to promote the production of type I interferons, plays a direct role in autophagy. Following cGAMP-binding, STING1 buds from the endoplasmic reticulum into COPII vesicles, which then form the endoplasmic reticulum-Golgi intermediate compartment (ERGIC). The ERGIC serves as the membrane source for WIPI2 recruitment and LC3 lipidation, leading to formation of autophagosomes that target cytosolic DNA or DNA viruses for degradation by the lysosome. Promotes autophagy by acting as a proton channel that directs proton efflux from the Golgi to facilitate MAP1LC3B/LC3B lipidation. The autophagy- and interferon-inducing activities can be uncoupled and autophagy induction is independent of TBK1 phosphorylation. The polypeptide is Stimulator of interferon genes protein (Pteronotus parnellii (Parnell's mustached bat)).